The chain runs to 634 residues: Zinc finger and BTB domain-containing protein 22 (634 aa).

The BTB domain occupies 57–121 (CDVSIRVQGR…AYTGRLSMAA (65 aa)). 2 disordered regions span residues 167 to 247 (TVPG…APVV) and 308 to 461 (APTP…GTSV). Residues 180–198 (TVAPATMGSARSHASSRAS) show a composition bias toward low complexity. Positions 199–209 (ENQSPSSSNYF) are enriched in polar residues. Residue S202 is modified to Phosphoserine. Over residues 217 to 229 (FSSSSQEAFAASA) the composition is skewed to low complexity. The span at 317–340 (PDLEEEEEEEDLVLTCEDDEDEEL) shows a compositional bias: acidic residues. Residues 452-461 (GAVTVGGTSV) are compositionally biased toward low complexity. The segment at 486–507 (FLCHCGKAFSHKSMRDRHVNMH) adopts a C2H2-type 1; atypical zinc-finger fold. C2H2-type zinc fingers lie at residues 513 to 535 (FDCPVCNKKFKMKHHLTEHMKTH) and 541 to 562 (YECGVCAKKFMWRDSFMRHRGH). A disordered region spans residues 568 to 634 (RLGGVGAVPG…MGFGGGGGAN (67 aa)). The segment covering 608-618 (PPSSRRVWSPP) has biased composition (low complexity).

It belongs to the krueppel C2H2-type zinc-finger protein family.

It is found in the nucleus. Its function is as follows. May be involved in transcriptional regulation. The sequence is that of Zinc finger and BTB domain-containing protein 22 (ZBTB22) from Homo sapiens (Human).